A 175-amino-acid chain; its full sequence is ATP synthase subunit delta (175 aa).

This sequence belongs to the ATPase delta chain family. As to quaternary structure, F-type ATPases have 2 components, F(1) - the catalytic core - and F(0) - the membrane proton channel. F(1) has five subunits: alpha(3), beta(3), gamma(1), delta(1), epsilon(1). F(0) has three main subunits: a(1), b(2) and c(10-14). The alpha and beta chains form an alternating ring which encloses part of the gamma chain. F(1) is attached to F(0) by a central stalk formed by the gamma and epsilon chains, while a peripheral stalk is formed by the delta and b chains.

It is found in the cell inner membrane. In terms of biological role, f(1)F(0) ATP synthase produces ATP from ADP in the presence of a proton or sodium gradient. F-type ATPases consist of two structural domains, F(1) containing the extramembraneous catalytic core and F(0) containing the membrane proton channel, linked together by a central stalk and a peripheral stalk. During catalysis, ATP synthesis in the catalytic domain of F(1) is coupled via a rotary mechanism of the central stalk subunits to proton translocation. Its function is as follows. This protein is part of the stalk that links CF(0) to CF(1). It either transmits conformational changes from CF(0) to CF(1) or is implicated in proton conduction. This Xanthomonas euvesicatoria pv. vesicatoria (strain 85-10) (Xanthomonas campestris pv. vesicatoria) protein is ATP synthase subunit delta.